The chain runs to 945 residues: Xylanolytic transcriptional activator xlnR (945 aa).

Disordered stretches follow at residues 1–33 (MSTP…TVGL) and 53–74 (AAGT…MSHA). The segment covering 14–24 (SPFSSGSQSTG) has biased composition (low complexity). Residues 125-151 (CDQCNQLRTKCDGQHPCAHCIEFGLTC) constitute a DNA-binding region (zn(2)-C6 fungal-type). 2 disordered regions span residues 172-251 (AAAA…PSLG) and 559-601 (PPNV…INVT). Polar residues-rich tracts occupy residues 177–188 (HGSNGHSGQANA) and 218–251 (ISSQ…PSLG). The span at 565 to 581 (ARQDGERDGDGEADRRH) shows a compositional bias: basic and acidic residues.

The protein belongs to the xlnR/xlr1 family.

The protein localises to the nucleus. In terms of biological role, transcriptional activator of the xylanolytic system. Involved in the regulation of extracellular cellulolytic and xylanolytic genes and in the regulation of the intracellular activities of D-xylose catabolic genes in the pentose catabolic pathway (PCP) in response to the presence of D-xylose. This chain is Xylanolytic transcriptional activator xlnR (xlnR), found in Aspergillus kawachii (White koji mold).